A 252-amino-acid chain; its full sequence is 2-succinyl-6-hydroxy-2,4-cyclohexadiene-1-carboxylate synthase (252 aa).

The protein belongs to the AB hydrolase superfamily. MenH family. In terms of assembly, monomer.

The enzyme catalyses 5-enolpyruvoyl-6-hydroxy-2-succinyl-cyclohex-3-ene-1-carboxylate = (1R,6R)-6-hydroxy-2-succinyl-cyclohexa-2,4-diene-1-carboxylate + pyruvate. Its pathway is quinol/quinone metabolism; 1,4-dihydroxy-2-naphthoate biosynthesis; 1,4-dihydroxy-2-naphthoate from chorismate: step 3/7. The protein operates within quinol/quinone metabolism; menaquinone biosynthesis. Catalyzes a proton abstraction reaction that results in 2,5-elimination of pyruvate from 2-succinyl-5-enolpyruvyl-6-hydroxy-3-cyclohexene-1-carboxylate (SEPHCHC) and the formation of 2-succinyl-6-hydroxy-2,4-cyclohexadiene-1-carboxylate (SHCHC). The chain is 2-succinyl-6-hydroxy-2,4-cyclohexadiene-1-carboxylate synthase from Salmonella choleraesuis (strain SC-B67).